The chain runs to 264 residues: Spermidine/putrescine transport system permease protein PotC (264 aa).

Transmembrane regions (helical) follow at residues 10–30 (FMTAIYAYLYIPIIILIVNSF), 66–86 (MAVFSATFATLIGSLTAVALY), 109–129 (IVMAISLLVLFMLLGIQLGFW), 131–151 (LLFSHITFCLPFVVVTVYSRL), 176–196 (IILPLAMPAVAAGWVLSFTLS), and 232–252 (ALATILLVLSLVMVIASQLIA). Residues 60–248 (AQHSLTMAVF…VLSLVMVIAS (189 aa)) enclose the ABC transmembrane type-1 domain.

This sequence belongs to the binding-protein-dependent transport system permease family. CysTW subfamily.

It localises to the cell inner membrane. Required for the activity of the bacterial periplasmic transport system of putrescine and spermidine. This Shigella flexneri protein is Spermidine/putrescine transport system permease protein PotC (potC).